Reading from the N-terminus, the 338-residue chain is DNA-directed RNA polymerase subunit alpha (338 aa).

The tract at residues 1 to 226 is alpha N-terminal domain (alpha-NTD); the sequence is MLIAQRPTLT…ELFGLTRELN (226 aa). Residues 243-338 form an alpha C-terminal domain (alpha-CTD) region; it reads YAESLGTPVE…DDDYAETEQY (96 aa). Residues 319–338 form a disordered region; the sequence is AAAEAYDEANDDDYAETEQY. Positions 323-338 are enriched in acidic residues; it reads AYDEANDDDYAETEQY.

The protein belongs to the RNA polymerase alpha chain family. As to quaternary structure, homodimer. The RNAP catalytic core consists of 2 alpha, 1 beta, 1 beta' and 1 omega subunit. When a sigma factor is associated with the core the holoenzyme is formed, which can initiate transcription.

It carries out the reaction RNA(n) + a ribonucleoside 5'-triphosphate = RNA(n+1) + diphosphate. In terms of biological role, DNA-dependent RNA polymerase catalyzes the transcription of DNA into RNA using the four ribonucleoside triphosphates as substrates. The protein is DNA-directed RNA polymerase subunit alpha of Cutibacterium acnes (strain DSM 16379 / KPA171202) (Propionibacterium acnes).